A 396-amino-acid polypeptide reads, in one-letter code: Elongation factor Tu (396 aa).

Positions 11–205 constitute a tr-type G domain; the sequence is KPHVNIGTIG…VIDDYIPTPK (195 aa). The G1 stretch occupies residues 20–27; that stretch reads GHVDHGKT. 20-27 provides a ligand contact to GTP; it reads GHVDHGKT. Residue Thr27 participates in Mg(2+) binding. The tract at residues 61–65 is G2; sequence GITIN. A G3 region spans residues 82–85; sequence DAPG. GTP is bound by residues 82-86 and 137-140; these read DAPGH and NKTD. The segment at 137 to 140 is G4; the sequence is NKTD. Residues 175–177 are G5; it reads SAL.

It belongs to the TRAFAC class translation factor GTPase superfamily. Classic translation factor GTPase family. EF-Tu/EF-1A subfamily. As to quaternary structure, monomer.

Its subcellular location is the cytoplasm. It carries out the reaction GTP + H2O = GDP + phosphate + H(+). GTP hydrolase that promotes the GTP-dependent binding of aminoacyl-tRNA to the A-site of ribosomes during protein biosynthesis. The protein is Elongation factor Tu of Limosilactobacillus reuteri (strain DSM 20016) (Lactobacillus reuteri).